The primary structure comprises 370 residues: Protein Mut11 (370 aa).

The tract at residues 1 to 22 (MARGPGDTDMDEASADAAIPSS) is disordered. 7 WD repeats span residues 38-77 (GHTK…RVNT), 80-119 (GHSC…CLRT), 122-162 (GHTN…CLRE), 165-204 (AHSD…CLKT), 208-247 (RDSP…TRRT), 262-301 (GFLG…VVGR), and 329-370 (GHTA…PAAA).

Belongs to the WD repeat WDR5/wds family.

The protein resides in the nucleus. Part of a complex involved in 'Lys-4' histone H3 methylation. The sequence is that of Protein Mut11 (Mut11) from Chlamydomonas reinhardtii (Chlamydomonas smithii).